The sequence spans 148 residues: 3-dehydroquinate dehydratase (148 aa).

Y22 serves as the catalytic Proton acceptor. Substrate-binding residues include N73, H79, and D86. The active-site Proton donor is the H99. Residues 100–101 and R110 contribute to the substrate site; that span reads LS.

It belongs to the type-II 3-dehydroquinase family. As to quaternary structure, homododecamer.

The catalysed reaction is 3-dehydroquinate = 3-dehydroshikimate + H2O. The protein operates within metabolic intermediate biosynthesis; chorismate biosynthesis; chorismate from D-erythrose 4-phosphate and phosphoenolpyruvate: step 3/7. Catalyzes a trans-dehydration via an enolate intermediate. This chain is 3-dehydroquinate dehydratase, found in Jannaschia sp. (strain CCS1).